Consider the following 280-residue polypeptide: Protein scylla (280 aa).

The tract at residues 39 to 96 is disordered; that stretch reads LMSKKAKTTTGGSSNGSNATATSTTTSTSSSIKHKQPAGSSNNNVGQSQSKKTKPSGS. 2 stretches are compositionally biased toward low complexity: residues 46–69 and 77–96; these read TTTGGSSNGSNATATSTTTSTSSS and GSSNNNVGQSQSKKTKPSGS.

It belongs to the DDIT4 family.

The protein resides in the cytoplasm. Its function is as follows. Inhibits cell growth by regulating the Tor pathway upstream of the Tsc1-Tsc2 complex and downstream of Akt1. Acts as a cell death activator during head development. This is Protein scylla (scyl) from Drosophila melanogaster (Fruit fly).